The sequence spans 465 residues: Muscarinic acetylcholine receptor M2 (465 aa).

At 1 to 21 (MNNSTNSSNNVALTSPYKTFE) the chain is on the extracellular side. N-linked (GlcNAc...) asparagine glycosylation is found at Asn2, Asn3, and Asn6. A helical membrane pass occupies residues 22–44 (VVFIVLVAGSLSLVTIIGNILVM). Topologically, residues 45–58 (VSIKVNRHLQTVNN) are cytoplasmic. The chain crosses the membrane as a helical span at residues 59 to 79 (YFLFSLACADLIIGVFSMNLY). The Extracellular segment spans residues 80-96 (TLYTVIGYWPLGPVVCD). Residues Cys95 and Cys175 are joined by a disulfide bond. Residues 97 to 118 (LWLALDYVVSNASVMNLLIISF) traverse the membrane as a helical segment. An Important for signaling motif is present at residues 119-121 (DRY). Residues 119-138 (DRYFCVTKPLTYPVKRTTKM) lie on the Cytoplasmic side of the membrane. Residues 139–161 (AGMMIAAAWVLSFILWAPAILFW) traverse the membrane as a helical segment. The Extracellular segment spans residues 162-183 (QFIVGVRTVEDGECYIQFFSNA). A helical membrane pass occupies residues 184 to 208 (AVTFGTAIAAFYLPVIIMTVLYWHI). Residues 209-386 (SRASKSRIKK…PPSREKKVTR (178 aa)) lie on the Cytoplasmic side of the membrane. The interval 217 to 319 (KKDKKEPVAN…SVGHSKDENS (103 aa)) is disordered. At Ser231 the chain carries Phosphoserine. Basic and acidic residues predominate over residues 253–269 (GLEHNKIQNGKTPRDAV). Polar residues-rich tracts occupy residues 283–292 (NDSTSVSAVA) and 303–312 (DENTVSTSVG). A helical membrane pass occupies residues 387 to 409 (TILAILLAFIITWAPYNVMVLIN). Residues 410-417 (TFCAPCIP) lie on the Extracellular side of the membrane. Cys412 and Cys415 are oxidised to a cystine. A helical membrane pass occupies residues 418–441 (NTVWTIGYWLCYINSTINPACYAL). The Important for signaling signature appears at 435-439 (NPACY). Residues 442–465 (CNATFKKTFKHLLMCHYKNIGATR) are Cytoplasmic-facing. Phosphothreonine occurs at positions 445, 449, and 464.

This sequence belongs to the G-protein coupled receptor 1 family. Muscarinic acetylcholine receptor subfamily. CHRM2 sub-subfamily. Interacts with ARRB1 and ARRB2. Interacts with RACK1; the interaction regulates CHRM2 internalization. In terms of processing, phosphorylated in response to agonist treatment.

It is found in the cell membrane. It localises to the postsynaptic cell membrane. The muscarinic acetylcholine receptor mediates various cellular responses, including inhibition of adenylate cyclase, breakdown of phosphoinositides and modulation of potassium channels through the action of G proteins. Primary transducing effect is adenylate cyclase inhibition. Signaling promotes phospholipase C activity, leading to the release of inositol trisphosphate (IP3); this then triggers calcium ion release into the cytosol. This is Muscarinic acetylcholine receptor M2 (CHRM2) from Bos taurus (Bovine).